An 866-amino-acid polypeptide reads, in one-letter code: Fibrinogen alpha chain (866 aa).

A signal peptide spans 1–19; the sequence is MFSMRIVCLVLSVVGTAWT. Serine 22 is modified (phosphoserine). Positions 36–38 are alpha-chain polymerization, binding distal domain of another fibrin gamma chain; the sequence is GPR. Serine 45 is subject to Phosphoserine; by FAM20C. Phosphoserine is present on serine 50. Serine 56 carries the phosphoserine; by FAM20C modification. The stretch at 68–631 forms a coiled coil; the sequence is CRMKGLIDEV…GHAKSRPVRD (564 aa). A disordered region spans residues 262-460; that stretch reads ERPGGNEITR…SGSTTTTRRS (199 aa). Over residues 270-299 the composition is skewed to low complexity; that stretch reads TRGGSTSYGTGSETESPRNPSSAGSWNSGS. 3 positions are modified to phosphoserine: serine 281, serine 291, and serine 294. O-linked (GalNAc...) threonine glycosylation is present at threonine 320. An Isoglutamyl lysine isopeptide (Lys-Gln) (interchain with Q-41 in alpha-2-antiplasmin) cross-link involves residue lysine 322. Residue glutamine 347 forms an Isoglutamyl lysine isopeptide (Gln-Lys) (interchain with K-?) linkage. O-linked (GalNAc...) serine glycosylation occurs at serine 351. Polar residues predominate over residues 354–391; it reads PGSTGTWNPGSSERGSAGHWTSESSVSGSTGQWHSESG. The residue at position 364 (serine 364) is a Phosphoserine; by FAM20C. Glutamine 385 is covalently cross-linked (Isoglutamyl lysine isopeptide (Gln-Lys) (interchain with K-?)). The residue at position 412 (threonine 412) is a Phosphothreonine. The span at 424–449 shows a compositional bias: basic and acidic residues; sequence TRREYHTEKLVTSKGDKELRTGKEKV. A compositionally biased stretch (low complexity) spans 450-460; that stretch reads TSGSTTTTRRS. A Phosphoserine modification is found at serine 451. Serine 453 carries N-linked (GlcNAc...) asparagine; in variant Caracas-2 glycosylation. Cysteine 461 and cysteine 491 are joined by a disulfide. Serine 501 carries the post-translational modification Phosphoserine. Threonine 505 carries the phosphothreonine modification. At serine 524 the chain carries Phosphoserine; by FAM20C. Isoglutamyl lysine isopeptide (Lys-Gln) (interchain with Q-?) cross-links involve residues lysine 527 and lysine 558. The disordered stretch occupies residues 543 to 638; sequence ETESRGSESG…VRDCDDVLQT (96 aa). The residue at position 560 (serine 560) is a Phosphoserine; by FAM20C. The residue at position 565 (proline 565) is a 4-hydroxyproline; by P4HA1. Residues lysine 575, lysine 581, and lysine 599 each participate in an isoglutamyl lysine isopeptide (Lys-Gln) (interchain with Q-?) cross-link. Residues 575–589 are compositionally biased toward low complexity; that stretch reads KSSSYSKQFTSSTSY. Basic and acidic residues predominate over residues 594–617; it reads STFESKSYKMADEAGSEADHEGTH. The residue at position 609 (serine 609) is a Phosphoserine; by FAM20C. The span at 618–627 shows a compositional bias: basic residues; the sequence is STKRGHAKSR. Residues 623–864 enclose the Fibrinogen C-terminal domain; that stretch reads HAKSRPVRDC…AVRMKIRPLV (242 aa). Residue asparagine 686 is glycosylated (N-linked (GlcNAc...) asparagine). Ca(2+) is bound by residues aspartate 791, aspartate 793, tryptophan 795, and glutamate 797. The cysteines at positions 799 and 812 are disulfide-linked.

As to quaternary structure, heterohexamer; disulfide linked. Contains 2 sets of 3 non-identical chains (alpha, beta and gamma). The 2 heterotrimers are in head to head conformation with the N-termini in a small central domain. In terms of assembly, (Microbial infection) Interacts with Staphylococcus aureus protein Fib; this interaction inhibits fibrinogen-dependent platelet aggregation and protects the bacteria form phagocytosis. The alpha chain is normally not N-glycosylated, even though glycosylation at Asn-686 was observed when a fragment of the protein was expressed in insect cells. It is well known that heterologous expression of isolated domains can lead to adventitious protein modifications. Besides, glycosylation at Asn-686 is supported by large-scale glycoproteomics studies, but the evidence is still quite tenuous. Most likely, Asn-686 is not glycosylated in the healthy human body, or only with low efficiency. Post-translationally, O-glycosylated. In terms of processing, forms F13A-mediated cross-links between a glutamine and the epsilon-amino group of a lysine residue, forming fibronectin-fibrinogen heteropolymers. About one-third of the alpha chains in the molecules in blood were found to be phosphorylated. Post-translationally, conversion of fibrinogen to fibrin is triggered by thrombin, which cleaves fibrinopeptides A and B from alpha and beta chains, and thus exposes the N-terminal polymerization sites responsible for the formation of the soft clot. The soft clot is converted into the hard clot by factor XIIIA which catalyzes the epsilon-(gamma-glutamyl)lysine cross-linking between gamma chains (stronger) and between alpha chains (weaker) of different monomers. In terms of processing, phosphorylated by FAM20C in the extracellular medium. Detected in blood plasma (at protein level).

The protein resides in the secreted. Its function is as follows. Cleaved by the protease thrombin to yield monomers which, together with fibrinogen beta (FGB) and fibrinogen gamma (FGG), polymerize to form an insoluble fibrin matrix. Fibrin has a major function in hemostasis as one of the primary components of blood clots. In addition, functions during the early stages of wound repair to stabilize the lesion and guide cell migration during re-epithelialization. Was originally thought to be essential for platelet aggregation, based on in vitro studies using anticoagulated blood. However, subsequent studies have shown that it is not absolutely required for thrombus formation in vivo. Enhances expression of SELP in activated platelets via an ITGB3-dependent pathway. Maternal fibrinogen is essential for successful pregnancy. Fibrin deposition is also associated with infection, where it protects against IFNG-mediated hemorrhage. May also facilitate the immune response via both innate and T-cell mediated pathways. The protein is Fibrinogen alpha chain (FGA) of Homo sapiens (Human).